Consider the following 579-residue polypeptide: Protein PLASTID MOVEMENT IMPAIRED 15 (579 aa).

4 coiled-coil regions span residues 90–161 (EVLK…NEEH), 188–216 (KVLD…IEIE), 383–419 (QKTK…KLES), and 481–501 (LMKT…EERE).

The protein belongs to the WEB family.

In terms of biological role, required for the chloroplast avoidance response under high intensity blue light. This avoidance response consists in the relocation of chloroplasts on the anticlinal side of exposed cells. The sequence is that of Protein PLASTID MOVEMENT IMPAIRED 15 (PMI15) from Arabidopsis thaliana (Mouse-ear cress).